Reading from the N-terminus, the 120-residue chain is NAD(P)H-quinone oxidoreductase subunit 3, organellar chromatophore (120 aa).

3 consecutive transmembrane segments (helical) span residues 6–26 (GYDAFLGFLLIATAVPVLALL), 64–84 (MFALVFVIFDVETVFLYPWAV), and 89–109 (LGLLAFIEALIFIAILVIALA).

Belongs to the complex I subunit 3 family. NDH is composed of at least 16 different subunits, 5 of which are encoded in the nucleus.

The protein localises to the plastid. It is found in the organellar chromatophore thylakoid membrane. It catalyses the reaction a plastoquinone + NADH + (n+1) H(+)(in) = a plastoquinol + NAD(+) + n H(+)(out). The enzyme catalyses a plastoquinone + NADPH + (n+1) H(+)(in) = a plastoquinol + NADP(+) + n H(+)(out). Functionally, NDH shuttles electrons from NAD(P)H:plastoquinone, via FMN and iron-sulfur (Fe-S) centers, to quinones in the photosynthetic chain and possibly in a chloroplast respiratory chain. The immediate electron acceptor for the enzyme in this species is believed to be plastoquinone. Couples the redox reaction to proton translocation, and thus conserves the redox energy in a proton gradient. This chain is NAD(P)H-quinone oxidoreductase subunit 3, organellar chromatophore, found in Paulinella chromatophora.